Reading from the N-terminus, the 227-residue chain is AN1-type zinc finger protein 3 (227 aa).

Residues 12-44 form an A20-type zinc finger; the sequence is PSLPPRCPCGFWGSSKTMNLCSKCFADFQKKQP. Zn(2+) contacts are provided by cysteine 18, cysteine 20, cysteine 32, and cysteine 35. A disordered region spans residues 41–151; it reads KKQPDDDSTP…RPEESGRSKQ (111 aa). 2 stretches are compositionally biased toward low complexity: residues 49 to 59 and 66 to 77; these read TPSTSNSQSDL and SDNNNTSVTTPT. Polar residues-rich tracts occupy residues 78-94 and 111-127; these read LSPS…VTSP and ITPT…SESE. Residues 135 to 148 are compositionally biased toward basic and acidic residues; it reads RLVENPERPEESGR. An AN1-type zinc finger spans residues 151-200; that stretch reads QKSRRRCFQCQTKLELVQQELGSCRCGYVFCMLHRLPEQHDCTFDHMGRG. Positions 157, 160, 174, 176, 181, 184, 190, and 192 each coordinate Zn(2+).

The protein is AN1-type zinc finger protein 3 (Zfand3) of Rattus norvegicus (Rat).